A 274-amino-acid polypeptide reads, in one-letter code: Non-structural protein 4 (274 aa).

Belongs to the aquareoviridae NS4 protein family.

The sequence is that of Non-structural protein 4 (S7) from Notemigonus crysoleucas (Golden shiner).